The chain runs to 318 residues: uncharacterized protein (318 aa).

It belongs to the NAD(P)-dependent epimerase/dehydratase family.

This is an uncharacterized protein from Staphylococcus epidermidis (strain ATCC 12228 / FDA PCI 1200).